Consider the following 256-residue polypeptide: Imidazole glycerol phosphate synthase subunit HisF (256 aa).

Residues Asp-11 and Asp-130 contribute to the active site.

The protein belongs to the HisA/HisF family. Heterodimer of HisH and HisF.

It is found in the cytoplasm. It carries out the reaction 5-[(5-phospho-1-deoxy-D-ribulos-1-ylimino)methylamino]-1-(5-phospho-beta-D-ribosyl)imidazole-4-carboxamide + L-glutamine = D-erythro-1-(imidazol-4-yl)glycerol 3-phosphate + 5-amino-1-(5-phospho-beta-D-ribosyl)imidazole-4-carboxamide + L-glutamate + H(+). The protein operates within amino-acid biosynthesis; L-histidine biosynthesis; L-histidine from 5-phospho-alpha-D-ribose 1-diphosphate: step 5/9. Functionally, IGPS catalyzes the conversion of PRFAR and glutamine to IGP, AICAR and glutamate. The HisF subunit catalyzes the cyclization activity that produces IGP and AICAR from PRFAR using the ammonia provided by the HisH subunit. This is Imidazole glycerol phosphate synthase subunit HisF from Psychrobacter sp. (strain PRwf-1).